The primary structure comprises 297 residues: Bilin biosynthesis protein MpeU (297 aa).

Belongs to the CpcE/RpcE/PecE family.

An enzyme involved in the biosynthesis of bilin. This is Bilin biosynthesis protein MpeU (mpeU) from Synechococcus sp. (strain WH8020).